Here is a 159-residue protein sequence, read N- to C-terminus: Transcription elongation factor GreA (159 aa).

Positions 5-77 (REVVLTAQGL…LETMLRKAVI (73 aa)) form a coiled coil.

Belongs to the GreA/GreB family.

Necessary for efficient RNA polymerase transcription elongation past template-encoded arresting sites. The arresting sites in DNA have the property of trapping a certain fraction of elongating RNA polymerases that pass through, resulting in locked ternary complexes. Cleavage of the nascent transcript by cleavage factors such as GreA or GreB allows the resumption of elongation from the new 3'terminus. GreA releases sequences of 2 to 3 nucleotides. The chain is Transcription elongation factor GreA from Alkaliphilus oremlandii (strain OhILAs) (Clostridium oremlandii (strain OhILAs)).